The following is a 447-amino-acid chain: Methyl-coenzyme M reductase II subunit beta (447 aa).

Y368 is a coenzyme M binding site. Position 370 (G370) interacts with coenzyme B.

Belongs to the methyl-coenzyme M reductase beta subunit family. In terms of assembly, MCR is a hexamer of two alpha, two beta, and two gamma chains, forming a dimer of heterotrimers. It depends on coenzyme F430 as a cofactor.

It catalyses the reaction coenzyme B + methyl-coenzyme M = methane + coenzyme M-coenzyme B heterodisulfide. The protein operates within one-carbon metabolism; methyl-coenzyme M reduction; methane from methyl-coenzyme M: step 1/1. Component of the methyl-coenzyme M reductase (MCR) I that catalyzes the reductive cleavage of methyl-coenzyme M (CoM-S-CH3 or 2-(methylthio)ethanesulfonate) using coenzyme B (CoB or 7-mercaptoheptanoylthreonine phosphate) as reductant which results in the production of methane and the mixed heterodisulfide of CoB and CoM (CoM-S-S-CoB). This is the final step in methanogenesis. The sequence is that of Methyl-coenzyme M reductase II subunit beta (mrtB) from Methanocaldococcus jannaschii (strain ATCC 43067 / DSM 2661 / JAL-1 / JCM 10045 / NBRC 100440) (Methanococcus jannaschii).